We begin with the raw amino-acid sequence, 195 residues long: Adenylate kinase (195 aa).

Residue 8-16 (GIPGVGKTT) coordinates ATP.

The protein belongs to the archaeal adenylate kinase family.

It localises to the cytoplasm. The catalysed reaction is AMP + ATP = 2 ADP. The protein is Adenylate kinase of Saccharolobus islandicus (strain M.14.25 / Kamchatka #1) (Sulfolobus islandicus).